The following is a 210-amino-acid chain: Fimbriae Z protein (210 aa).

The Response regulatory domain maps to 5–121 (SVIIMDEHPI…DIYNAVKMIL (117 aa)). Asp-56 bears the 4-aspartylphosphate mark. In terms of domain architecture, HTH luxR-type spans 143–208 (GGHHDMPLSN…ELIDYAKSHE (66 aa)). The segment at residues 167–186 (NKEIAEQLLLSNKTISAHKA) is a DNA-binding region (H-T-H motif).

It is found in the cytoplasm. This Salmonella typhimurium (strain LT2 / SGSC1412 / ATCC 700720) protein is Fimbriae Z protein (fimZ).